The following is a 145-amino-acid chain: Large ribosomal subunit protein uL11 (145 aa).

The protein belongs to the universal ribosomal protein uL11 family. Part of the ribosomal stalk of the 50S ribosomal subunit. Interacts with L10 and the large rRNA to form the base of the stalk. L10 forms an elongated spine to which L12 dimers bind in a sequential fashion forming a multimeric L10(L12)X complex. Post-translationally, one or more lysine residues are methylated.

Functionally, forms part of the ribosomal stalk which helps the ribosome interact with GTP-bound translation factors. The sequence is that of Large ribosomal subunit protein uL11 from Porphyromonas gingivalis (strain ATCC 33277 / DSM 20709 / CIP 103683 / JCM 12257 / NCTC 11834 / 2561).